Consider the following 378-residue polypeptide: Polar flagellin B/D (378 aa).

Coiled-coil stretches lie at residues 103–128 (SNSKAERVAIQEEVTALNDELNRIAE) and 311–340 (AFQNRFNHAISNLDNINENVNASKSRIKDT).

This sequence belongs to the bacterial flagellin family. In terms of assembly, heteromer of multiple flagellin subunits including FlaA, FlaB/D, FlaC, FlaE and FlaF.

It localises to the secreted. The protein resides in the bacterial flagellum. Flagellin is the subunit protein which polymerizes to form the filaments of bacterial flagella. FlaB/D is not essential for polar flagellar synthesis and swimming motility. Homomer of FlaB/D is not able to form a functional filament. The chain is Polar flagellin B/D (flaB) from Vibrio parahaemolyticus serotype O3:K6 (strain RIMD 2210633).